Here is a 476-residue protein sequence, read N- to C-terminus: Aspartyl/glutamyl-tRNA(Asn/Gln) amidotransferase subunit B (476 aa).

Belongs to the GatB/GatE family. GatB subfamily. In terms of assembly, heterotrimer of A, B and C subunits.

The enzyme catalyses L-glutamyl-tRNA(Gln) + L-glutamine + ATP + H2O = L-glutaminyl-tRNA(Gln) + L-glutamate + ADP + phosphate + H(+). It catalyses the reaction L-aspartyl-tRNA(Asn) + L-glutamine + ATP + H2O = L-asparaginyl-tRNA(Asn) + L-glutamate + ADP + phosphate + 2 H(+). Functionally, allows the formation of correctly charged Asn-tRNA(Asn) or Gln-tRNA(Gln) through the transamidation of misacylated Asp-tRNA(Asn) or Glu-tRNA(Gln) in organisms which lack either or both of asparaginyl-tRNA or glutaminyl-tRNA synthetases. The reaction takes place in the presence of glutamine and ATP through an activated phospho-Asp-tRNA(Asn) or phospho-Glu-tRNA(Gln). The chain is Aspartyl/glutamyl-tRNA(Asn/Gln) amidotransferase subunit B from Clostridium botulinum (strain Kyoto / Type A2).